The primary structure comprises 951 residues: Kinase suppressor of Ras 2 (951 aa).

Residues 237–298 (PPPPPLESGH…PGTPPPSSRK (62 aa)) are disordered. The span at 260–274 (RTPPRTPNIVTTVTP) shows a compositional bias: low complexity. Residues T273 and T277 each carry the phosphothreonine modification. The Phorbol-ester/DAG-type zinc finger occupies 413 to 457 (KHRFSTKYWMSQTCTVCGKGMLFGLKCKNCKLKCHNKCTKEAPPC). Zn(2+)-binding residues include H414, C426, C429, C439, C442, H447, C450, and C457. Residue S475 is modified to Phosphoserine; by MARK3. Disordered regions lie at residues 489-559 (RYSD…QKKN) and 614-634 (EPTSENEESHNEAEESEDEFE). Residues 494 to 503 (HISQTLPKTN) show a composition bias toward polar residues. The residue at position 498 (T498) is a Phosphothreonine. Low complexity predominate over residues 518–531 (SSSNPSSTTSSTPS). Over residues 532–552 (SPAPPLPPSATPPSPLHPSPQ) the composition is skewed to pro residues. Residues 667-932 (LEIGELIGKG…TKLMDMLEKL (266 aa)) form the Protein kinase domain. 673 to 681 (IGKGRFGQV) lines the ATP pocket. Catalysis depends on D787, which acts as the Proton donor/acceptor. ATP contacts are provided by K789 and D804.

The protein belongs to the protein kinase superfamily. TKL Ser/Thr protein kinase family. Heterodimerizes (via N-terminus) with BRAF (via N-terminus) in a MAP2K1/MEK1-dependent manner. Interacts with BRAF; this increases the low intrinsic protein kinase activity of KSR2. Interacts with MAP2K1, forming a heterodimer that can dimerize to form a heterotetramer. Interacts with MAP3K8, MAPK, RAS and RAF. In terms of processing, phosphorylated on Ser-475 by MARK3.

It localises to the cytoplasm. Its subcellular location is the membrane. The enzyme catalyses L-seryl-[protein] + ATP = O-phospho-L-seryl-[protein] + ADP + H(+). It carries out the reaction L-threonyl-[protein] + ATP = O-phospho-L-threonyl-[protein] + ADP + H(+). In terms of biological role, location-regulated scaffold connecting MEK to RAF. Has very low protein kinase activity and can phosphorylate MAP2K1 at several Ser and Thr residues with very low efficiency (in vitro). Acts as MAP2K1/MEK1-dependent allosteric activator of BRAF; upon binding to MAP2K1/MEK1, dimerizes with BRAF and promotes BRAF-mediated phosphorylation of MAP2K1/MEK1. Interaction with BRAF enhances KSR2-mediated phosphorylation of MAP2K1 (in vitro). Blocks MAP3K8 kinase activity and MAP3K8-mediated signaling. Acts as a negative regulator of MAP3K3-mediated activation of ERK, JNK and NF-kappa-B pathways, inhibiting MAP3K3-mediated interleukin-8 production. This chain is Kinase suppressor of Ras 2, found in Mus musculus (Mouse).